Here is a 305-residue protein sequence, read N- to C-terminus: uncharacterized protein (305 aa).

Positions 1 to 29 are cleaved as a signal peptide; the sequence is MSKAVSEILGYMYIFGIVMAVLAIVFVQV.

This is an uncharacterized protein from Archaeoglobus fulgidus (strain ATCC 49558 / DSM 4304 / JCM 9628 / NBRC 100126 / VC-16).